Consider the following 493-residue polypeptide: ATP-dependent rRNA helicase RRP3 (493 aa).

2 stretches are compositionally biased toward basic and acidic residues: residues A26–E42 and E51–K62. The tract at residues A26 to E68 is disordered. Residues E73–A101 carry the Q motif motif. One can recognise a Helicase ATP-binding domain in the interval I104–C276. A117–T124 contacts ATP. Positions D223–D226 match the DEAD box motif. The Helicase C-terminal domain maps to L307–V453. The interval R467–K493 is disordered. A compositionally biased stretch (basic and acidic residues) spans M483 to K493.

Belongs to the DEAD box helicase family. DDX47/RRP3 subfamily. In terms of assembly, interacts with the SSU processome.

The protein localises to the nucleus. The enzyme catalyses ATP + H2O = ADP + phosphate + H(+). Functionally, ATP-dependent rRNA helicase required for pre-ribosomal RNA processing. Involved in the maturation of the 35S-pre-rRNA and to its cleavage to mature 18S rRNA. This Candida glabrata (strain ATCC 2001 / BCRC 20586 / JCM 3761 / NBRC 0622 / NRRL Y-65 / CBS 138) (Yeast) protein is ATP-dependent rRNA helicase RRP3.